A 245-amino-acid chain; its full sequence is 1-(5-phosphoribosyl)-5-[(5-phosphoribosylamino)methylideneamino] imidazole-4-carboxamide isomerase (245 aa).

Asp10 serves as the catalytic Proton acceptor. The active-site Proton donor is Asp135.

Belongs to the HisA/HisF family.

It localises to the cytoplasm. The catalysed reaction is 1-(5-phospho-beta-D-ribosyl)-5-[(5-phospho-beta-D-ribosylamino)methylideneamino]imidazole-4-carboxamide = 5-[(5-phospho-1-deoxy-D-ribulos-1-ylimino)methylamino]-1-(5-phospho-beta-D-ribosyl)imidazole-4-carboxamide. It participates in amino-acid biosynthesis; L-histidine biosynthesis; L-histidine from 5-phospho-alpha-D-ribose 1-diphosphate: step 4/9. This chain is 1-(5-phosphoribosyl)-5-[(5-phosphoribosylamino)methylideneamino] imidazole-4-carboxamide isomerase, found in Methanosarcina barkeri (strain Fusaro / DSM 804).